A 328-amino-acid chain; its full sequence is GMP reductase (328 aa).

Catalysis depends on C176, which acts as the Thioimidate intermediate. Residue 205-228 participates in NADP(+) binding; sequence IIADGGIRTHGDIAKSIRFGASMI.

It belongs to the IMPDH/GMPR family. GuaC type 2 subfamily.

The catalysed reaction is IMP + NH4(+) + NADP(+) = GMP + NADPH + 2 H(+). Its function is as follows. Catalyzes the irreversible NADPH-dependent deamination of GMP to IMP. It functions in the conversion of nucleobase, nucleoside and nucleotide derivatives of G to A nucleotides, and in maintaining the intracellular balance of A and G nucleotides. This Streptococcus pneumoniae (strain ATCC 700669 / Spain 23F-1) protein is GMP reductase.